Here is a 178-residue protein sequence, read N- to C-terminus: Chorion class high-cysteine HCB protein 13 (178 aa).

A signal peptide spans 1 to 21 (MAAKLILFVCAIALVAQSVLG). The interval 22-46 (TGCGCCCRGCGCGCGGCGSRCCDRF) is left arm. Residues 47 to 110 (CLCSNSAAPT…GDGCVGITQS (64 aa)) are central domain. Residues 111–178 (CGGCGCGCGG…GCGCGGCGCC (68 aa)) form a right arm (Gly-rich tandem repeats) region.

Belongs to the chorion protein family.

Functionally, this protein is one of many from the eggshell of the silk moth. This is Chorion class high-cysteine HCB protein 13 from Bombyx mori (Silk moth).